The primary structure comprises 256 residues: 5'-nucleotidase SurE (256 aa).

Residues D9, D10, S40, and N94 each contribute to the a divalent metal cation site.

This sequence belongs to the SurE nucleotidase family. It depends on a divalent metal cation as a cofactor.

It is found in the cytoplasm. The catalysed reaction is a ribonucleoside 5'-phosphate + H2O = a ribonucleoside + phosphate. Functionally, nucleotidase that shows phosphatase activity on nucleoside 5'-monophosphates. This Campylobacter fetus subsp. fetus (strain 82-40) protein is 5'-nucleotidase SurE.